The sequence spans 29 residues: Snake venom metalloproteinase bothrolysin (29 aa).

The region spanning 6 to 29 (RYIELFLVVDSGMFMKYNGNSDKI) is the Peptidase M12B domain. Residue Glu-9 participates in Ca(2+) binding.

The protein belongs to the venom metalloproteinase (M12B) family. Requires Zn(2+) as cofactor. As to expression, expressed by the venom gland.

The protein resides in the secreted. It catalyses the reaction Cleavage of 4-Gln-|-His-5, 9-Ser-|-His-10 and 14-Ala-|-Leu-15 of insulin B chain and Pro-|-Phe of angiotensin I.. Snake venom zinc metalloproteinase that impairs hemostasis in the envenomed animal. In Bothrops jararaca (Jararaca), this protein is Snake venom metalloproteinase bothrolysin.